Consider the following 261-residue polypeptide: Thiazole synthase (261 aa).

The active-site Schiff-base intermediate with DXP is Lys95. Residues Gly156, 182–183 (AG), and 204–205 (NT) contribute to the 1-deoxy-D-xylulose 5-phosphate site.

Belongs to the ThiG family. Homotetramer. Forms heterodimers with either ThiH or ThiS.

The protein resides in the cytoplasm. The catalysed reaction is [ThiS sulfur-carrier protein]-C-terminal-Gly-aminoethanethioate + 2-iminoacetate + 1-deoxy-D-xylulose 5-phosphate = [ThiS sulfur-carrier protein]-C-terminal Gly-Gly + 2-[(2R,5Z)-2-carboxy-4-methylthiazol-5(2H)-ylidene]ethyl phosphate + 2 H2O + H(+). The protein operates within cofactor biosynthesis; thiamine diphosphate biosynthesis. Its function is as follows. Catalyzes the rearrangement of 1-deoxy-D-xylulose 5-phosphate (DXP) to produce the thiazole phosphate moiety of thiamine. Sulfur is provided by the thiocarboxylate moiety of the carrier protein ThiS. In vitro, sulfur can be provided by H(2)S. The sequence is that of Thiazole synthase from Pectobacterium carotovorum subsp. carotovorum (strain PC1).